A 177-amino-acid chain; its full sequence is Large ribosomal subunit protein uL6 (177 aa).

It belongs to the universal ribosomal protein uL6 family. In terms of assembly, part of the 50S ribosomal subunit.

Functionally, this protein binds to the 23S rRNA, and is important in its secondary structure. It is located near the subunit interface in the base of the L7/L12 stalk, and near the tRNA binding site of the peptidyltransferase center. The chain is Large ribosomal subunit protein uL6 from Salmonella newport (strain SL254).